A 566-amino-acid polypeptide reads, in one-letter code: Arginine--tRNA ligase (566 aa).

A 'HIGH' region motif is present at residues 123-133 (PNIAKPFHIGH).

This sequence belongs to the class-I aminoacyl-tRNA synthetase family. In terms of assembly, monomer.

It is found in the cytoplasm. It carries out the reaction tRNA(Arg) + L-arginine + ATP = L-arginyl-tRNA(Arg) + AMP + diphosphate. The polypeptide is Arginine--tRNA ligase (Halothermothrix orenii (strain H 168 / OCM 544 / DSM 9562)).